A 146-amino-acid chain; its full sequence is Transcriptional regulator MraZ (146 aa).

2 SpoVT-AbrB domains span residues 5-50 (SSFH…TFNE) and 77-120 (ACEC…SREQ).

The protein belongs to the MraZ family. Forms oligomers.

It localises to the cytoplasm. The protein localises to the nucleoid. The polypeptide is Transcriptional regulator MraZ (Desulforapulum autotrophicum (strain ATCC 43914 / DSM 3382 / VKM B-1955 / HRM2) (Desulfobacterium autotrophicum)).